Here is a 202-residue protein sequence, read N- to C-terminus: ATP-dependent Clp protease proteolytic subunit (202 aa).

The active-site Nucleophile is Ser101. Residue His126 is part of the active site.

Belongs to the peptidase S14 family. As to quaternary structure, component of the chloroplastic Clp protease core complex.

It localises to the plastid. The protein localises to the chloroplast stroma. It catalyses the reaction Hydrolysis of proteins to small peptides in the presence of ATP and magnesium. alpha-casein is the usual test substrate. In the absence of ATP, only oligopeptides shorter than five residues are hydrolyzed (such as succinyl-Leu-Tyr-|-NHMec, and Leu-Tyr-Leu-|-Tyr-Trp, in which cleavage of the -Tyr-|-Leu- and -Tyr-|-Trp bonds also occurs).. Functionally, cleaves peptides in various proteins in a process that requires ATP hydrolysis. Has a chymotrypsin-like activity. Plays a major role in the degradation of misfolded proteins. The chain is ATP-dependent Clp protease proteolytic subunit from Illicium oligandrum (Star anise).